The primary structure comprises 493 residues: Vinyl phenol reductase (493 aa).

Positions 19, 38, 46, 50, 52, 156, 224, 448, and 467 each coordinate FAD.

The protein belongs to the FAD-dependent oxidoreductase 2 family. FRD/SDH subfamily. Requires FAD as cofactor.

It catalyses the reaction 4-vinylphenol + NADH + H(+) = 4-ethylphenol + NAD(+). The catalysed reaction is 3,4-dihydroxystyrene + NADH + H(+) = 4-ethylcatechol + NAD(+). It carries out the reaction 2-methoxy-4-vinylphenol + NADH + H(+) = 4-ethyl-2-methoxyphenol + NAD(+). Functionally, involved in the production of ethylphenols during the degradation of hydroxycinnamic acids. Catalyzes the reduction of vinylphenols (4-vinylphenol (4-hydroxystyrene), 4-vinylcatechol (3,4-dihydroxystyrene), and 4-vinylguaiacol (2-methoxy-4-vinylphenol)) to their corresponding ethylphenols (4-ethylphenol, 4-ethylcatechol, and 4-ethylguaiacol, respectively) in the presence of NADH. These compounds are considered the most important flavor components of fermented soy sauce, and, on the other hand, are considered off flavor and responsible for sensorial wine and cider alteration. The 4-ethylphenol produced by the gut bacteria L.plantarum strain WCFS1 can get subsequent sulfation to 4-ethylphenyl sulfate (4EPS) by host sulfotransferase (SULT1A1); 4EPS can enter the brain and seems to alter brain activity. Therefore, this enzyme likely plays a role in gut microbiota-host metabolic interactions. The protein is Vinyl phenol reductase of Lactiplantibacillus plantarum (strain ATCC BAA-793 / NCIMB 8826 / WCFS1) (Lactobacillus plantarum).